The sequence spans 208 residues: Small ribosomal subunit protein uS4 (208 aa).

The 81-residue stretch at 98-178 (SRLDNVVYRM…RPKWLEYDAE (81 aa)) folds into the S4 RNA-binding domain.

Belongs to the universal ribosomal protein uS4 family. In terms of assembly, part of the 30S ribosomal subunit. Contacts protein S5. The interaction surface between S4 and S5 is involved in control of translational fidelity.

Its function is as follows. One of the primary rRNA binding proteins, it binds directly to 16S rRNA where it nucleates assembly of the body of the 30S subunit. In terms of biological role, with S5 and S12 plays an important role in translational accuracy. The protein is Small ribosomal subunit protein uS4 of Acetivibrio thermocellus (strain ATCC 27405 / DSM 1237 / JCM 9322 / NBRC 103400 / NCIMB 10682 / NRRL B-4536 / VPI 7372) (Clostridium thermocellum).